Consider the following 232-residue polypeptide: Large ribosomal subunit protein uL3 (232 aa).

This sequence belongs to the universal ribosomal protein uL3 family. As to quaternary structure, part of the 50S ribosomal subunit. Forms a cluster with proteins L14 and L19.

One of the primary rRNA binding proteins, it binds directly near the 3'-end of the 23S rRNA, where it nucleates assembly of the 50S subunit. The protein is Large ribosomal subunit protein uL3 of Hydrogenobaculum sp. (strain Y04AAS1).